A 640-amino-acid polypeptide reads, in one-letter code: Large subunit GTPase 1 homolog (640 aa).

Residues tryptophan 165–proline 426 enclose the CP-type G domain. Asparagine 213 to aspartate 216 is a GTP binding site. Residues alanine 251–asparagine 341 are disordered. Acidic residues-rich tracts occupy residues glutamate 253–glutamate 270, glutamate 290–aspartate 304, and glutamate 320–proline 331. The segment covering glutamate 332–asparagine 341 has biased composition (polar residues). Residues glycine 375–serine 382 and aspartate 419–glycine 422 contribute to the GTP site. Residues glycine 602–alanine 640 form a disordered region. The span at proline 618–alanine 640 shows a compositional bias: basic residues.

The protein belongs to the TRAFAC class YlqF/YawG GTPase family. LSG1 subfamily.

It is found in the cytoplasm. Its subcellular location is the endoplasmic reticulum. It localises to the nucleus. The protein localises to the cajal body. The enzyme catalyses GTP + H2O = GDP + phosphate + H(+). Functionally, functions as a GTPase. May act by mediating the release of NMD3 from the 60S ribosomal subunit after export into the cytoplasm during the 60S ribosomal subunit maturation. The protein is Large subunit GTPase 1 homolog of Danio rerio (Zebrafish).